Consider the following 436-residue polypeptide: Putative ankyrin repeat protein FPV026 (436 aa).

ANK repeat units lie at residues 63–92 (EGIR…NVNE), 101–130 (TCYS…DVNN), 135–164 (LRNT…DQNI), 168–197 (NGNI…NLEI), 201–230 (NGRT…LVDS), and 234–266 (EGYT…FLNI). One can recognise an F-box domain in the interval 409-436 (TSTITNLPYEVIYIIVEKMTNKELCEIR).

The chain is Putative ankyrin repeat protein FPV026 from Fowlpox virus (strain NVSL) (FPV).